A 384-amino-acid chain; its full sequence is 8-amino-7-oxononanoate synthase (384 aa).

Arg-21 is a binding site for substrate. Position 108-109 (108-109 (GF)) interacts with pyridoxal 5'-phosphate. His-133 is a binding site for substrate. Pyridoxal 5'-phosphate-binding residues include Ser-179, His-207, and Thr-233. Lys-236 is modified (N6-(pyridoxal phosphate)lysine). Thr-352 serves as a coordination point for substrate.

It belongs to the class-II pyridoxal-phosphate-dependent aminotransferase family. BioF subfamily. In terms of assembly, homodimer. The cofactor is pyridoxal 5'-phosphate.

It catalyses the reaction 6-carboxyhexanoyl-[ACP] + L-alanine + H(+) = (8S)-8-amino-7-oxononanoate + holo-[ACP] + CO2. It participates in cofactor biosynthesis; biotin biosynthesis. Catalyzes the decarboxylative condensation of pimeloyl-[acyl-carrier protein] and L-alanine to produce 8-amino-7-oxononanoate (AON), [acyl-carrier protein], and carbon dioxide. In Escherichia coli O157:H7, this protein is 8-amino-7-oxononanoate synthase.